Reading from the N-terminus, the 201-residue chain is Large ribosomal subunit protein uL4 (201 aa).

The disordered stretch occupies residues 45 to 75 (AQKSRSEVSGSGKKPWRQKGTGRARSGSLRS).

The protein belongs to the universal ribosomal protein uL4 family. In terms of assembly, part of the 50S ribosomal subunit.

In terms of biological role, one of the primary rRNA binding proteins, this protein initially binds near the 5'-end of the 23S rRNA. It is important during the early stages of 50S assembly. It makes multiple contacts with different domains of the 23S rRNA in the assembled 50S subunit and ribosome. Functionally, forms part of the polypeptide exit tunnel. This chain is Large ribosomal subunit protein uL4, found in Buchnera aphidicola subsp. Cinara cedri (strain Cc).